The sequence spans 118 residues: D-dopachrome decarboxylase-B (118 aa).

Pro-2 is modified (N-acetylproline).

The protein belongs to the MIF family. As to quaternary structure, homotrimer.

The protein localises to the cytoplasm. The catalysed reaction is D-dopachrome + H(+) = 5,6-dihydroxyindole + CO2. Functionally, tautomerization of D-dopachrome with decarboxylation to give 5,6-dihydroxyindole (DHI). This Xenopus laevis (African clawed frog) protein is D-dopachrome decarboxylase-B (ddt-b).